A 450-amino-acid chain; its full sequence is Phosphoglucosamine mutase (450 aa).

Ser97 functions as the Phosphoserine intermediate in the catalytic mechanism. Residues Ser97, Asp236, Asp238, and Asp240 each contribute to the Mg(2+) site. Ser97 is subject to Phosphoserine.

This sequence belongs to the phosphohexose mutase family. The cofactor is Mg(2+). In terms of processing, activated by phosphorylation.

It catalyses the reaction alpha-D-glucosamine 1-phosphate = D-glucosamine 6-phosphate. Catalyzes the conversion of glucosamine-6-phosphate to glucosamine-1-phosphate. This is Phosphoglucosamine mutase from Prochlorococcus marinus (strain AS9601).